The sequence spans 657 residues: PAN2-PAN3 deadenylation complex subunit PAN3 (657 aa).

3 disordered regions span residues 1–29 (MASAGKPNIDDGRRGTSSPKLKGRDHAKD), 52–98 (HDPS…SATI), and 115–135 (SRSNAATPQSQPETSTPEWSI). The segment at 27–55 (AKDTLCRNVTIYGRCRYEDKGCVFNHDPS) adopts a C3H1-type zinc-finger fold. The segment covering 52–67 (HDPSRVNDAQHPERSS) has biased composition (basic and acidic residues). Polar residues-rich tracts occupy residues 75–98 (DSPSFTPSATPLNGSSGLKKSATI) and 115–132 (SRSNAATPQSQPETSTPE). The interval 259–521 (QTLPNSQLPT…TIDIFISGIS (263 aa)) is pseudokinase domain. ATP-binding positions include R311, 360-367 (DYHPLSKT), and 421-422 (SK). The stretch at 522–560 (SQLMSTFDSSLHLDDQLISDLSRELENARLVRLLTKLNF) forms a coiled coil. A knob domain region spans residues 561–657 (INERPEYEHD…QALLKPARRI (97 aa)).

This sequence belongs to the protein kinase superfamily. PAN3 family. Homodimer. Forms a heterotrimer with a catalytic subunit PAN2 to form the poly(A)-nuclease (PAN) deadenylation complex. Interacts (via PAM-2 motif) with poly(A)-binding protein PAB1 (via PABC domain), conferring substrate specificity of the enzyme complex.

The protein localises to the cytoplasm. Regulatory subunit of the poly(A)-nuclease (PAN) deadenylation complex, one of two cytoplasmic mRNA deadenylases involved in mRNA turnover. PAN specifically shortens poly(A) tails of RNA and the activity is stimulated by poly(A)-binding protein PAB1. PAN deadenylation is followed by rapid degradation of the shortened mRNA tails by the CCR4-NOT complex. Deadenylated mRNAs are then degraded by two alternative mechanisms, namely exosome-mediated 3'-5' exonucleolytic degradation, or deadenylation-dependent mRNA decaping and subsequent 5'-3' exonucleolytic degradation by XRN1. May also be involved in post-transcriptional maturation of mRNA poly(A) tails. PAN3 acts as a positive regulator for PAN activity, recruiting the catalytic subunit PAN2 to mRNA via its interaction with RNA and with PAB1. In Coccidioides immitis (strain RS) (Valley fever fungus), this protein is PAN2-PAN3 deadenylation complex subunit PAN3.